We begin with the raw amino-acid sequence, 810 residues long: RING finger protein unkempt homolog (810 aa).

The tract at residues 1-24 (MSKGPGPGGSAASSAPPAATAQVL) is disordered. The span at 10–19 (SAASSAPPAA) shows a compositional bias: low complexity. 5 consecutive C3H1-type zinc fingers follow at residues 84-113 (YSPD…HRTT), 124-154 (YYKT…HGPH), 215-241 (NYKT…HNSK), 251-285 (KYRS…HTRT), and 293-321 (IYKS…HVEQ). The disordered stretch occupies residues 239–265 (NSKDRRRSPRKHKYRSSPCPNVKHGDE). A Phosphoserine modification is found at Ser240. Residues 241–253 (KDRRRSPRKHKYR) are compositionally biased toward basic residues. The interval 324-343 (LSDDLQPSSTVSSPTQPGPV) is disordered. Residues 329 to 343 (QPSSTVSSPTQPGPV) show a composition bias toward low complexity. Phosphoserine is present on residues Ser374, Ser378, and Ser385. Low complexity predominate over residues 569-585 (SASFHSASPSPPVSLSS). Residues 569–602 (SASFHSASPSPPVSLSSHFLQQPQGHLSQSENTF) form a disordered region. Residues 586–602 (HFLQQPQGHLSQSENTF) are compositionally biased toward polar residues. Ser631 is modified (phosphoserine). Residues 643–723 (GAAELARLRQ…QEELERLHSG (81 aa)) adopt a coiled-coil conformation. The segment at 766–801 (SVKCLKCQEQNRAVLPCQHAVLCELCAEGSECPVCQ) adopts an RING-type; degenerate zinc-finger fold.

Belongs to the unkempt family.

The protein resides in the cytoplasm. Its function is as follows. Sequence-specific RNA-binding protein which plays an important role in the establishment and maintenance of the early morphology of cortical neurons during embryonic development. Acts as a translation repressor and controls a translationally regulated cell morphology program to ensure proper structuring of the nervous system. Translational control depends on recognition of its binding element within target mRNAs which consists of a mandatory UAG trimer upstream of a U/A-rich motif. Associated with polysomes. This is RING finger protein unkempt homolog (UNK) from Canis lupus familiaris (Dog).